A 392-amino-acid polypeptide reads, in one-letter code: Stilbene synthase 5 (392 aa).

55–58 (KFNR) contacts substrate. Residue C164 is part of the active site. Substrate-binding positions include L267 and 305–307 (GGP).

It belongs to the thiolase-like superfamily. Chalcone/stilbene synthases family. In terms of assembly, homodimer.

The protein resides in the cytoplasm. It catalyses the reaction 4-coumaroyl-CoA + 3 malonyl-CoA + 3 H(+) = trans-resveratrol + 4 CO2 + 4 CoA. Its pathway is phytoalexin biosynthesis; 3,4',5-trihydroxystilbene biosynthesis; 3,4',5-trihydroxystilbene from trans-4-coumarate: step 2/2. Mediates resistance to pathogens which are sensitive to stilbenes. This Vitis vinifera (Grape) protein is Stilbene synthase 5.